The following is a 221-amino-acid chain: NEDD8 ultimate buster 1 (221 aa).

3 UBA domains span residues 1–19 (LGLR…HIAN), 30–76 (EERE…LLHN), and 95–135 (SPSQ…LVHN). Residues 136–193 (GGRLPPDLQLSAEDSSSTPSTSPSDSAGTSSASTDEDMETEAVNEILEDIPEHEEDYL) are disordered. The segment covering 146-168 (SAEDSSSTPSTSPSDSAGTSSAS) has biased composition (low complexity). Residues 169–193 (TDEDMETEAVNEILEDIPEHEEDYL) are compositionally biased toward acidic residues.

Directly interacts with NEDD8 and PSMD4/S5a, a member of the regulatory subunit of the 26S proteasome. Interacts with AIPL1.

It is found in the nucleus. In terms of biological role, specific down-regulator of the NEDD8 conjugation system. Recruits NEDD8 and its conjugates to the proteasome for degradation. The polypeptide is NEDD8 ultimate buster 1 (NUB1) (Bos taurus (Bovine)).